The following is a 161-amino-acid chain: Cytochrome c-type biogenesis protein CcmE (161 aa).

Topologically, residues 1-8 (MNPRRQKR) are cytoplasmic. The helical; Signal-anchor for type II membrane protein transmembrane segment at 9–29 (LGIILAILIGVSATIGLMIYA) threads the bilayer. Residues 30–161 (LNQNMDLFYT…SEEQKQGSGQ (132 aa)) are Periplasmic-facing. Residues H129 and Y133 each coordinate heme.

The protein belongs to the CcmE/CycJ family.

The protein resides in the cell inner membrane. Functionally, heme chaperone required for the biogenesis of c-type cytochromes. Transiently binds heme delivered by CcmC and transfers the heme to apo-cytochromes in a process facilitated by CcmF and CcmH. This Vibrio vulnificus (strain CMCP6) protein is Cytochrome c-type biogenesis protein CcmE.